The chain runs to 192 residues: MCKDTYFSGEAIQLSDMLRAREERALRQLHLLKEYPEGSLLSVTMNIPGPIKTSPKLLEAFDIVIKAIQTALADDKICYQLRLLPTTGYEYYLITSLPSQDLKLKMIALETDLPIGRLMDLDVLVLSNGRPSPISRTTLGAPPRQCFICSKEAKVCGRLRKHSVEEMQTAISKLLHSFFNKDNQSSSSDKTG.

The protein belongs to the CitX family.

The enzyme catalyses apo-[citrate lyase ACP] + 2'-(5''-triphospho-alpha-D-ribosyl)-3'-dephospho-CoA = holo-[citrate lyase ACP] + diphosphate. In terms of biological role, transfers 2-(5''-triphosphoribosyl)-3'-dephosphocoenzyme-A on a serine residue to the apo-acyl carrier protein (gamma chain) of the citrate lyase to yield holo-acyl carrier protein. This chain is Probable apo-citrate lyase phosphoribosyl-dephospho-CoA transferase, found in Streptococcus pyogenes serotype M18 (strain MGAS8232).